Here is a 310-residue protein sequence, read N- to C-terminus: Protoheme IX farnesyltransferase 2 (310 aa).

A run of 9 helical transmembrane segments spans residues Pro25–Gly45, Leu49–Ile69, His98–Thr118, Leu121–Met141, Ser145–Cys165, Val176–Phe196, Ile222–Thr242, Ala245–Tyr265, and Gln277–Phe297.

Belongs to the UbiA prenyltransferase family. Protoheme IX farnesyltransferase subfamily.

The protein localises to the cell inner membrane. It catalyses the reaction heme b + (2E,6E)-farnesyl diphosphate + H2O = Fe(II)-heme o + diphosphate. It functions in the pathway porphyrin-containing compound metabolism; heme O biosynthesis; heme O from protoheme: step 1/1. Functionally, converts heme B (protoheme IX) to heme O by substitution of the vinyl group on carbon 2 of heme B porphyrin ring with a hydroxyethyl farnesyl side group. This is Protoheme IX farnesyltransferase 2 from Shewanella sp. (strain MR-4).